The following is a 316-amino-acid chain: UPF0613 protein PB24D3.06c (316 aa).

Belongs to the UPF0613 family.

The protein resides in the cytoplasm. Its subcellular location is the nucleus. This is UPF0613 protein PB24D3.06c from Schizosaccharomyces pombe (strain 972 / ATCC 24843) (Fission yeast).